Reading from the N-terminus, the 112-residue chain is UPF0482 protein SG1468 (112 aa).

A signal peptide spans M1–A22.

It belongs to the UPF0482 family.

The sequence is that of UPF0482 protein SG1468 from Sodalis glossinidius (strain morsitans).